Consider the following 69-residue polypeptide: Large ribosomal subunit protein bL31 (69 aa).

Residues Cys-16, Cys-18, Cys-36, and Cys-39 each contribute to the Zn(2+) site.

The protein belongs to the bacterial ribosomal protein bL31 family. Type A subfamily. As to quaternary structure, part of the 50S ribosomal subunit. Zn(2+) is required as a cofactor.

Binds the 23S rRNA. The sequence is that of Large ribosomal subunit protein bL31 from Kosmotoga olearia (strain ATCC BAA-1733 / DSM 21960 / TBF 19.5.1).